Reading from the N-terminus, the 88-residue chain is Small ribosomal subunit protein uS15 (88 aa).

It belongs to the universal ribosomal protein uS15 family. As to quaternary structure, part of the 30S ribosomal subunit. Forms a bridge to the 50S subunit in the 70S ribosome, contacting the 23S rRNA.

Functionally, one of the primary rRNA binding proteins, it binds directly to 16S rRNA where it helps nucleate assembly of the platform of the 30S subunit by binding and bridging several RNA helices of the 16S rRNA. Forms an intersubunit bridge (bridge B4) with the 23S rRNA of the 50S subunit in the ribosome. In Psychrobacter arcticus (strain DSM 17307 / VKM B-2377 / 273-4), this protein is Small ribosomal subunit protein uS15.